Consider the following 301-residue polypeptide: uncharacterized protein (301 aa).

Residues E146, E148, and D177 each coordinate a divalent metal cation.

Belongs to the FAH family.

This is an uncharacterized protein from Staphylococcus saprophyticus subsp. saprophyticus (strain ATCC 15305 / DSM 20229 / NCIMB 8711 / NCTC 7292 / S-41).